A 620-amino-acid polypeptide reads, in one-letter code: Estrogen receptor (620 aa).

Composition is skewed to polar residues over residues 1–10 and 101–111; these read MSKRQSSVQI and GSLQSLGSGPT. 2 disordered regions span residues 1–55 and 88–111; these read MSKR…RGSG and YSAP…SGPT. The tract at residues 1–185 is modulating; the sequence is MSKRQSSVQI…GFEMAKDTRF (185 aa). 2 consecutive NR C4-type zinc fingers follow at residues 186–206 and 222–246; these read CAVC…CEGC and CPAT…LRKC. The nuclear receptor DNA-binding region spans 186–251; the sequence is CAVCSDYASG…RLRKCYEVGM (66 aa). Residues 252-314 are hinge; that stretch reads MKGGVRKDRI…GGGRLSVTSI (63 aa). Positions 286–308 are disordered; it reads KTVHYDGRKRSSTGGGGGGGGGR. A compositionally biased stretch (gly residues) spans 298-308; it reads TGGGGGGGGGR. Residues 315-551 enclose the NR LBD domain; the sequence is PPEQVLLLLQ…DLLLEMLDAH (237 aa). A disordered region spans residues 558-620; sequence RAPQSLSQVD…RPDCTPALQD (63 aa).

It belongs to the nuclear hormone receptor family. NR3 subfamily. In terms of assembly, binds DNA as a homodimer. Can form a heterodimer with ER-beta. In terms of tissue distribution, widely expressed in brain, ovary, testis, and female liver.

It is found in the nucleus. Its function is as follows. The steroid hormones and their receptors are involved in the regulation of eukaryotic gene expression and affect cellular proliferation and differentiation in target tissues. The protein is Estrogen receptor (esr1) of Oryzias latipes (Japanese rice fish).